Here is a 202-residue protein sequence, read N- to C-terminus: Large ribosomal subunit protein bL17 (202 aa).

A disordered region spans residues 148 to 202 (DEAPAAESTDAAQVEAGGVEQPDTLPDADAPATADEGVEVDAAEVDPSDEKKDQA). The segment covering 169 to 182 (PDTLPDADAPATAD) has biased composition (low complexity). The span at 183–194 (EGVEVDAAEVDP) shows a compositional bias: acidic residues.

It belongs to the bacterial ribosomal protein bL17 family. As to quaternary structure, part of the 50S ribosomal subunit. Contacts protein L32.

The sequence is that of Large ribosomal subunit protein bL17 from Kineococcus radiotolerans (strain ATCC BAA-149 / DSM 14245 / SRS30216).